A 199-amino-acid polypeptide reads, in one-letter code: Probable GTP-binding protein EngB (199 aa).

Residues aspartate 28–valine 199 form the EngB-type G domain. Residues glycine 36 to serine 43, glycine 63 to leucine 67, aspartate 81 to glycine 84, threonine 148 to aspartate 151, and phenylalanine 180 to serine 182 contribute to the GTP site. Residues serine 43 and threonine 65 each contribute to the Mg(2+) site.

This sequence belongs to the TRAFAC class TrmE-Era-EngA-EngB-Septin-like GTPase superfamily. EngB GTPase family. Mg(2+) is required as a cofactor.

In terms of biological role, necessary for normal cell division and for the maintenance of normal septation. This is Probable GTP-binding protein EngB from Streptococcus pyogenes serotype M28 (strain MGAS6180).